The sequence spans 397 residues: Staphylopine export protein (397 aa).

12 helical membrane passes run 12–32 (LYIL…FIPL), 38–58 (GATN…AMVF), 77–97 (IILI…LEGY), 102–122 (VMQG…IIDA), 134–154 (LYSL…VGIW), 158–178 (NISL…FFGY), 217–237 (GIIM…VPLY), 239–259 (VSLG…AVVA), 285–305 (LLVI…IIFY), 309–329 (ILIG…LSFV), 337–357 (MLLG…GALM), and 363–383 (LVGF…IMIM).

It belongs to the major facilitator superfamily.

Its subcellular location is the cell membrane. Its function is as follows. Involved in the export of the metallophore staphylopine. The chain is Staphylopine export protein from Staphylococcus aureus (strain Mu50 / ATCC 700699).